Consider the following 231-residue polypeptide: 7-cyano-7-deazaguanine synthase (231 aa).

8 to 18 (FSGGQDSTTCL) provides a ligand contact to ATP. Zn(2+)-binding residues include Cys188, Cys197, Cys200, and Cys203.

It belongs to the QueC family. Requires Zn(2+) as cofactor.

The catalysed reaction is 7-carboxy-7-deazaguanine + NH4(+) + ATP = 7-cyano-7-deazaguanine + ADP + phosphate + H2O + H(+). It functions in the pathway purine metabolism; 7-cyano-7-deazaguanine biosynthesis. Catalyzes the ATP-dependent conversion of 7-carboxy-7-deazaguanine (CDG) to 7-cyano-7-deazaguanine (preQ(0)). This Salmonella schwarzengrund (strain CVM19633) protein is 7-cyano-7-deazaguanine synthase.